The chain runs to 268 residues: Phosphate import ATP-binding protein PstB 2 (268 aa).

Residues 19-263 (YKVRNMAFFY…PKDKRTEDYI (245 aa)) form the ABC transporter domain. Residue 51–58 (GPSGCGKS) coordinates ATP.

It belongs to the ABC transporter superfamily. Phosphate importer (TC 3.A.1.7) family. In terms of assembly, the complex is composed of two ATP-binding proteins (PstB), two transmembrane proteins (PstC and PstA) and a solute-binding protein (PstS).

It is found in the cell inner membrane. The catalysed reaction is phosphate(out) + ATP + H2O = ADP + 2 phosphate(in) + H(+). Part of the ABC transporter complex PstSACB involved in phosphate import. Responsible for energy coupling to the transport system. In Gloeobacter violaceus (strain ATCC 29082 / PCC 7421), this protein is Phosphate import ATP-binding protein PstB 2.